Consider the following 119-residue polypeptide: Large ribosomal subunit protein bL12 (119 aa).

Belongs to the bacterial ribosomal protein bL12 family. As to quaternary structure, homodimer. Part of the ribosomal stalk of the 50S ribosomal subunit. Forms a multimeric L10(L12)X complex, where L10 forms an elongated spine to which 2 to 4 L12 dimers bind in a sequential fashion. Binds GTP-bound translation factors.

Forms part of the ribosomal stalk which helps the ribosome interact with GTP-bound translation factors. Is thus essential for accurate translation. The chain is Large ribosomal subunit protein bL12 from Bacillus cytotoxicus (strain DSM 22905 / CIP 110041 / 391-98 / NVH 391-98).